Consider the following 405-residue polypeptide: MINYNFRNRTSFPEDFLKKANVIKQIQNRFYTYGYDQIETPLFEDYDMYSNVQGTVQQDDMVKVIHSSGRVLVLRPDVTIPITRQYVETDMTSHYQRFSYCLDIFRFNETQQAYRTQAGVEFFGDESPEADAEVIALAIDSLKDLKIAPFKIEIGHSGIYKELLEQANLTDQEQQTLHALIQSKNISETSSFLDHLSIDQDLKQKIELIPMLYGDPSTVIKRAQAIVTNETMQQVVDTLFNVYSLLKDDQIEEYISFNLGLINNMNYYSGIIFQGFTEQIGQPILMGGRYDHLSSQFENEIPAVGFAFEIDKLLTLITPGDQPLITQADFLIEYQPNCRQDALLLARRLRQANKKVIIQPTESSSKIKASNIILVDSNSYQLKSSDIQTTFSSIDQTLQHVLKKR.

It belongs to the class-II aminoacyl-tRNA synthetase family. HisZ subfamily. In terms of assembly, heteromultimer composed of HisG and HisZ subunits.

The protein resides in the cytoplasm. The protein operates within amino-acid biosynthesis; L-histidine biosynthesis; L-histidine from 5-phospho-alpha-D-ribose 1-diphosphate: step 1/9. Its function is as follows. Required for the first step of histidine biosynthesis. May allow the feedback regulation of ATP phosphoribosyltransferase activity by histidine. The sequence is that of ATP phosphoribosyltransferase regulatory subunit from Oceanobacillus iheyensis (strain DSM 14371 / CIP 107618 / JCM 11309 / KCTC 3954 / HTE831).